Here is a 621-residue protein sequence, read N- to C-terminus: MADFEELRNMVSSFRVSELQVLLGFAGRNKSGRKHDLLMRALHLLKSGCSPAVQIKIRELYRRRYPRTLEGLSDLSTIKSSVFSLDGGSSPVEPDLAVAGIHSLPSTSVTPHSPSSPVGSVLLQDTKPTFEMQQPSPPIPPVHPDVQLKNLPFYDVLDVLIKPTSLVQSSIQRFQEKFFIFALTPQQVREICISRDFLPGGRRDYTVQVQLRLCLAETSCPQEDNYPNSLCIKVNGKLFPLPGYAPPPKNGIEQKRPGRPLNITSLVRLSSAVPNQISISWASEIGKNYSMSVYLVRQLTSAMLLQRLKMKGIRNPDHSRALIKEKLTADPDSEIATTSLRVSLMCPLGKMRLTIPCRAVTCTHLQCFDAALYLQMNEKKPTWICPVCDKKAAYESLILDGLFMEILNDCSDVDEIKFQEDGSWCPMRPKKEAMKVSSQPCTKIESSSVLSKPCSVTVASEASKKKVDVIDLTIESSSDEEEDPPAKRKCIFMSETQSSPTKGVLMYQPSSVRVPSVTSVDPAAIPPSLTDYSVPFHHTPISSMSSDLPGLDFLSLIPVDPQYCPPMFLDSLTSPLTASSTSVTTTSSHESSTHVSSSSSRSETGVITSSGSNIPDIISLD.

The region spanning 11 to 45 (VSSFRVSELQVLLGFAGRNKSGRKHDLLMRALHLL) is the SAP domain. The LXXLL motif motif lies at 19–23 (LQVLL). Glycyl lysine isopeptide (Lys-Gly) (interchain with G-Cter in SUMO2) cross-links involve residues Lys-46 and Lys-249. Positions 134-299 (QPSPPIPPVH…SMSVYLVRQL (166 aa)) constitute a PINIT domain. The segment at 331–412 (PDSEIATTSL…FMEILNDCSD (82 aa)) adopts an SP-RING-type zinc-finger fold. Residues Cys-362, His-364, Cys-385, and Cys-388 each contribute to the Zn(2+) site. Residues Lys-430, Lys-435, Lys-443, and Lys-452 each participate in a glycyl lysine isopeptide (Lys-Gly) (interchain with G-Cter in SUMO2) cross-link. The tract at residues 467-473 (VDVIDLT) is SUMO1-binding. Ser-476, Ser-477, and Ser-478 each carry phosphoserine. The Nuclear localization signal signature appears at 484-492 (PPAKRKCIF). Lys-489 is covalently cross-linked (Glycyl lysine isopeptide (Lys-Gly) (interchain with G-Cter in SUMO2)). A Phosphoserine modification is found at Ser-499. Residues Lys-502 and Gln-562 each participate in a glycyl lysine isopeptide (Lys-Gly) (interchain with G-Cter in SUMO2) cross-link. Residues 579–610 (SSTSVTTTSSHESSTHVSSSSSRSETGVITSS) are compositionally biased toward low complexity. The tract at residues 579–621 (SSTSVTTTSSHESSTHVSSSSSRSETGVITSSGSNIPDIISLD) is disordered.

The protein belongs to the PIAS family. In terms of assembly, binds SUMO1 and UBE2I. Interacts with AXIN1, JUN, MDM2, PARK7, TP53 and TP73 isoform alpha, but not TP73 isoform beta. Interacts with STAT4 following IL12 and IFN-alpha stimulation of T-cells. Interacts also with GTF2I, GTF2IRD1, IKFZ1, DAB2 and MSX2, as well as with several steroid receptors, including ESR1, ESR2, NR3C1, PGR, AR, and with NCOA2. Sumoylation of a target protein seems to enhance the interaction. Binds to sumoylated ELK1. Binds DNA, such as CDKN1A promoter, in a sequence-specific manner. Interacts with PLAG1. Interacts with KLF8; the interaction results in SUMO ligation and repression of KLF8 transcriptional activity and of its cell cycle progression into G(1) phase. PIAS2-beta interacts with IFIH1/MDA5. Isoform PIAS2-alpha interacts with PML (isoform PML-12). Interacts with PRDM1/Blimp-1. In terms of processing, sumoylated. As to expression, mainly expressed in testis. Isoform 3 is expressed predominantly in adult testis, weakly in pancreas, embryonic testis and sperm, and at very low levels in other organs.

It is found in the nucleus speckle. The protein resides in the nucleus. The protein localises to the PML body. It participates in protein modification; protein sumoylation. In terms of biological role, functions as an E3-type small ubiquitin-like modifier (SUMO) ligase, stabilizing the interaction between UBE2I and the substrate, and as a SUMO-tethering factor. Plays a crucial role as a transcriptional coregulator in various cellular pathways, including the STAT pathway, the p53 pathway and the steroid hormone signaling pathway. The effects of this transcriptional coregulation, transactivation or silencing may vary depending upon the biological context and the PIAS2 isoform studied. However, it seems to be mostly involved in gene silencing. Binds to sumoylated ELK1 and enhances its transcriptional activity by preventing recruitment of HDAC2 by ELK1, thus reversing SUMO-mediated repression of ELK1 transactivation activity. Isoform PIAS2-beta, but not isoform PIAS2-alpha, promotes MDM2 sumoylation. Isoform PIAS2-alpha promotes PARK7 sumoylation. Isoform PIAS2-beta promotes NCOA2 sumoylation more efficiently than isoform PIAS2-alpha. Isoform PIAS2-alpha sumoylates PML at'Lys-65' and 'Lys-160'. This Homo sapiens (Human) protein is E3 SUMO-protein ligase PIAS2 (PIAS2).